Consider the following 751-residue polypeptide: MGNHLSDAMKILESGKLETEQGQEGRKMSWKEIPGPLQGDGQDVVSILQLVQNLMHGDDEEQGHRMQFVGEQGHMALLGHSLAAYISVLERERLRKLTTRILSDTTLWLCRLFRYENGSAYFHEDDREGLLKVCRLVMNTHYEDFTTEGFTALSSKHPVIYQSAACRPGLGQHLCSQLGLPLSCLCVVPCNTMFGSLHQMDVALLDKLVKDDRDSGKLPLLLIANAGTPGAGHTDKLSRLKELCVQYNMWLHVEGVNLATLVLGQVSSTVTAATKCDSMTLTPGPWLGLPAVPAVTLYRHEDPALSLAAGLTSSQPVEKLRALPLWLSLQYLGHDGIVERIKHASQLSQQLLEHLKTLASIKTSVEDELNSPVVVFRFSHENSAPSSGGSVEGSYAGERDILDAFNRWLGDQLAEQVPLSGVDVVELEDEGTCVRFSPLMTAAALGTQENDVAALVEKLAEMIPLLCCTLRLRQDFRDEVLQQASLSYIEDLNWPGLGVVRFEPRTTDLDEDKRQDRVEKINSDLLKKLMELDTDLNFSGGPEFSEEKNCIFIGIATEDLDVAELVETIMSLGRDIEESGKLFENMTEVVRKGIQEAELQLQKANEEKLMEEGVLRQIPLVSSVLNWFSPVQASVKGRTFNLAEGCLDSTEPVYSIKAQMRKEDSPDSPKANTRRFPGQKLFRRPGAGSDSISETSSVSQLEESFRETLHSQAADEAEVPQERPAHILEETAIADQRVPEGQEAESVETIR.

Residues 659–751 (QMRKEDSPDS…QEAESVETIR (93 aa)) form a disordered region. The span at 690–702 (DSISETSSVSQLE) shows a compositional bias: polar residues. Basic and acidic residues predominate over residues 720–729 (PQERPAHILE). Acidic residues predominate over residues 742 to 751 (QEAESVETIR).

The protein belongs to the group II decarboxylase family. Pyridoxal 5'-phosphate serves as cofactor.

This is Pyridoxal-dependent decarboxylase domain-containing protein 1 (pdxdc1) from Danio rerio (Zebrafish).